Here is a 40-residue protein sequence, read N- to C-terminus: MDLRLVLVASPILLALGWAGFNIGRAAVGQLQLMIKRSRA.

The chain crosses the membrane as a helical span at residues L5–I23.

It belongs to the PsbY family. PSII is composed of 1 copy each of membrane proteins PsbA, PsbB, PsbC, PsbD, PsbE, PsbF, PsbH, PsbI, PsbJ, PsbK, PsbL, PsbM, PsbT, PsbX, PsbY, PsbZ, Psb30/Ycf12, peripheral proteins PsbO, CyanoQ (PsbQ), PsbU, PsbV and a large number of cofactors. It forms dimeric complexes.

It is found in the cellular thylakoid membrane. Functionally, loosely associated component of the core of photosystem II (PSII), it is not always seen in crystals. PSII is a light-driven water plastoquinone oxidoreductase, using light energy to abstract electrons from H(2)O, generating a proton gradient subsequently used for ATP formation. The protein is Photosystem II reaction center protein Y of Synechococcus sp. (strain WH7803).